We begin with the raw amino-acid sequence, 218 residues long: Probable chemoreceptor glutamine deamidase CheD (218 aa).

The protein belongs to the CheD family.

The enzyme catalyses L-glutaminyl-[protein] + H2O = L-glutamyl-[protein] + NH4(+). Probably deamidates glutamine residues to glutamate on methyl-accepting chemotaxis receptors (MCPs), playing an important role in chemotaxis. This chain is Probable chemoreceptor glutamine deamidase CheD, found in Saccharophagus degradans (strain 2-40 / ATCC 43961 / DSM 17024).